A 118-amino-acid chain; its full sequence is UPF0145 protein PTO0347 (118 aa).

Belongs to the UPF0145 family.

The sequence is that of UPF0145 protein PTO0347 from Picrophilus torridus (strain ATCC 700027 / DSM 9790 / JCM 10055 / NBRC 100828 / KAW 2/3).